A 327-amino-acid chain; its full sequence is Protein CONSERVED IN THE GREEN LINEAGE AND DIATOMS 27, chloroplastic (327 aa).

The N-terminal 59 residues, 1 to 59 (MLRLIVNYPLIPKISHRVCSNSSSKLGSYYDSSSIIKYGGISDVVGKKQELFLSVSVKA), are a transit peptide targeting the chloroplast. The segment at 66–88 (NGGGSMSFSGQSWDPSSEIEVPS) is disordered. The next 3 helical transmembrane spans lie at 119-139 (LGGL…AASF), 148-168 (FILA…LRIY), and 225-245 (LIGT…ATPV).

As to expression, mostly expressed in seeds, leaves and flowers, and, to a lower extent, in roots.

It is found in the membrane. The protein localises to the plastid. The protein resides in the chloroplast. In terms of biological role, required for growth in low iron conditions. The protein is Protein CONSERVED IN THE GREEN LINEAGE AND DIATOMS 27, chloroplastic of Arabidopsis thaliana (Mouse-ear cress).